The sequence spans 382 residues: Succinyl-diaminopimelate desuccinylase (382 aa).

Histidine 73 is a Zn(2+) binding site. Residue aspartate 75 is part of the active site. Position 106 (aspartate 106) interacts with Zn(2+). Catalysis depends on glutamate 140, which acts as the Proton acceptor. The Zn(2+) site is built by glutamate 141, glutamate 169, and histidine 355.

Belongs to the peptidase M20A family. DapE subfamily. In terms of assembly, homodimer. Zn(2+) serves as cofactor. Co(2+) is required as a cofactor.

It carries out the reaction N-succinyl-(2S,6S)-2,6-diaminopimelate + H2O = (2S,6S)-2,6-diaminopimelate + succinate. It participates in amino-acid biosynthesis; L-lysine biosynthesis via DAP pathway; LL-2,6-diaminopimelate from (S)-tetrahydrodipicolinate (succinylase route): step 3/3. Its function is as follows. Catalyzes the hydrolysis of N-succinyl-L,L-diaminopimelic acid (SDAP), forming succinate and LL-2,6-diaminopimelate (DAP), an intermediate involved in the bacterial biosynthesis of lysine and meso-diaminopimelic acid, an essential component of bacterial cell walls. This is Succinyl-diaminopimelate desuccinylase from Cellvibrio japonicus (strain Ueda107) (Pseudomonas fluorescens subsp. cellulosa).